The chain runs to 1280 residues: MRKTPSHTEKKMVYSIRSLKNGTGSVLIGASLVLLAMATPTISSDESTPTTNEPNNRNTTTLAQPLTDTAAGSGKNESDISSPGNANASLEKTEEKPAASPADPAPQTGQDRSSEPTTSTSPVTTETKAEEPIEDNYFRIHVKKLPEENKDAQGLWTWDDVEKPSENWPNGALSFKDAKKDDYGYYLDVKLKGEQAKKISFLINNTAGKNLTGDKSVEKLVPKMNEAWLDQDYKVFSYEPQPAGTVRVNYYRTDGNYDKKSLWYWGDVKNPSSAQWPDGTDFTATGKYGRYIDIPLNEAAREFGFLLLDESKQGDDVKIRKENYKFTDLKNHSQIFLKDDDESIYTNPYYVHDIRMTGAQHVGTSSIESSFSTLVGAKKEDILKHSNITNHLGNKVTITDVAIDEAGKKVTYSGDFSDTKHPYTVSYNSDQFTTKTSWRLKDETYSYDGKLGADLKEEGKQVDLTLWSPSADKVSVVVYDKNDPDKVVGTVALEKGERGTWKQTLDSTNKLGITDFTGYYYQYQIERQGKTVLALDPYAKSLAAWNSDDSKIDDAHKVAKAAFVDPAKLGPQDLTYGKIHNFKTREDAVIYEAHVRDFTSDPAIAKDLTKPFGTFEAFIEKLDYLKDLGVTHIQLLPVLSYYFVNELKNHERLSDYASSNSNYNWGYDPQNYFSLTGMYSSDPKNPEKRIAEFKNLINEIHKRGMGAILDVVYNHTAKVDLFEDLEPNYYHFMDADGTPRTSFGGGRLGTTHHMTKRLLIDSIKYLVDTYKVDGFRFDMMGDHDAASIEEAYKAARALNPNLIMLGEGWRTYAGDENMPTKAADQDWMKHTDTVAVFSDDIRNNLKSGYPNEGQPAFITGGKRDVNTIFKNLIAQPTNFEADSPGDVIQYIAAHDNLTLFDIIAQSIKKDPSKAENYAEIHRRLRLGNLMVLTAQGTPFIHSGQEYGRTKQFRDPAYKTPVAEDKVPNKSHLLRDKDGNPFDYPYFIHDSYDSSDAVNKFDWTKATDGKAYPENVKSRDYMKGLIALRQSTDAFRLKSLQDIKDRVHLITVPGQNGVEKEDVVIGYQITAPNGDIYAVFVNADEKAREFNLGTAFAHLRNAEVLADENQAGPVGIANPKGLEWTEKGLKLNALTATVLRVSQNGTSHESTAEEKPDSTPSKPEHQNEASHPAHQDPAPEARPDSTKPDAKVADAENKPSQATADSQAEQPAQEAQASSVKEAVRNESVENSSKENIPATPDKQAELPNTGIKNENKLLFAGISLLALLGLGFLLKNKKEN.

An N-terminal signal peptide occupies residues methionine 1–serine 44. Positions isoleucine 42–proline 132 are disordered. The segment covering threonine 48 to threonine 61 has biased composition (low complexity). A compositionally biased stretch (polar residues) spans aspartate 79–leucine 90. Residues glutamate 115–glutamate 126 show a composition bias toward low complexity. Residues tryptophan 156 to tryptophan 158, tryptophan 168, aspartate 214, tryptophan 263 to tryptophan 265, tryptophan 276, lysine 318, and asparagine 323 contribute to the substrate site. Ca(2+)-binding residues include serine 661 and tyrosine 663. Substrate-binding positions include tyrosine 667–aspartate 668 and phenylalanine 743. Aspartate 778 serves as the catalytic Nucleophile. Catalysis depends on glutamate 807, which acts as the Proton donor. A substrate-binding site is contributed by tryptophan 809. Ca(2+) contacts are provided by methionine 828, threonine 831, and aspartate 832. Residues aspartate 839, arginine 842, and tyrosine 849 each coordinate substrate. Ca(2+)-binding residues include aspartate 882 and aspartate 886. Residues asparagine 896, lysine 969, and aspartate 989 to tyrosine 991 contribute to the substrate site. Aspartate 992 serves as a coordination point for Ca(2+). Residues valine 1140–asparagine 1248 form a disordered region. Over residues serine 1149–asparagine 1196 the composition is skewed to basic and acidic residues. Low complexity predominate over residues serine 1205–serine 1218. Residues leucine 1246 to glycine 1250 carry the LPXTG sorting signal motif. At threonine 1249 the chain carries Pentaglycyl murein peptidoglycan amidated threonine. The propeptide at glycine 1250–asparagine 1280 is removed by sortase.

This sequence belongs to the glycosyl hydrolase 13 family.

It localises to the secreted. The protein resides in the cell wall. The protein localises to the cell surface. The catalysed reaction is Hydrolysis of (1-&gt;6)-alpha-D-glucosidic linkages in pullulan, amylopectin and glycogen, and in the alpha- and beta-limit dextrins of amylopectin and glycogen.. Inhibited by 4-O-alpha-D-glucopyranosylmoranoline (G1M). Virulence factor. Involved in the degradation of glycogen of the mammalian host cells. Hydrolyzes the alpha-1,6-branchpoints of glycogen. Hydrolyzes pullulan. Does not hydrolyze dextran. Binds to mouse lung alveolar type II cells that are rich in glycogen stores. Is an alpha-glucan-specific carbohydrate-binding protein, which binds to amylose (pure alpha-(1,4)-linked glucose), amylopectin (alpha-(1,4)-linked glucose with alpha-(1,6) branch points), pullulan (linear polymer of mixed alpha-(1,4)- and alpha-(1,6)-linked glucose) and glycogen (similar to amylopectin with more frequent alpha-(1,6) branch points) in vitro. Does not bind to dextran (a linear polymer of alpha-(1,6)-linked glucose). In Streptococcus pneumoniae serotype 4 (strain ATCC BAA-334 / TIGR4), this protein is Pullulanase A.